Consider the following 221-residue polypeptide: Membrane-bound lytic murein transglycosylase E (221 aa).

Belongs to the transglycosylase Slt family.

It catalyses the reaction Exolytic cleavage of the (1-&gt;4)-beta-glycosidic linkage between N-acetylmuramic acid (MurNAc) and N-acetylglucosamine (GlcNAc) residues in peptidoglycan, from either the reducing or the non-reducing ends of the peptidoglycan chains, with concomitant formation of a 1,6-anhydrobond in the MurNAc residue.. In terms of biological role, murein-degrading enzyme. May play a role in recycling of muropeptides during cell elongation and/or cell division. The chain is Membrane-bound lytic murein transglycosylase E (mltE) from Buchnera aphidicola subsp. Acyrthosiphon pisum (strain APS) (Acyrthosiphon pisum symbiotic bacterium).